The primary structure comprises 414 residues: MTQANLSETLFKPRFKHPETSTLVRRFNHGAQPPVQSALDGKTIPHWYRMINRLMWIWRGIDPREILDVQARIVMSDAERTDDDLYDTVIGYRGGNWIYEWATQAMVWQQKACTEEDPQLSGRHWLHAATLYNIAAYPHLKGDDLAEQAQALSNRAYEEAAQRLPGTMRQMEFTVPGGAPITGFLHMPKGDGPFPTVLMCGGLDAMQTDYYSLYERYFAPRGIAMLTIDMPSVGFSSKWKLTQDSSLLHQHVLKALPNVPWVDHTRVAAFGFRFGANVAVRLAYLESPRLKAVACLGPVVHTLLSDFKCQQQVPEMYLDVLASRLGMHDASDEALRVELNRYSLKVQGLLGRRCPTPMLSGYWKNDPFSPEEDSRLITSSSADGKLLEIPFNPVYRNFDKGLQEITGWIEKRLC.

This sequence belongs to the FrsA family.

The catalysed reaction is a carboxylic ester + H2O = an alcohol + a carboxylate + H(+). Catalyzes the hydrolysis of esters. The chain is Esterase FrsA from Shigella flexneri serotype 5b (strain 8401).